The following is a 484-amino-acid chain: UDP-N-acetylmuramoyl-L-alanyl-D-glutamate--2,6-diaminopimelate ligase (484 aa).

Residue Ser30 coordinates UDP-N-acetyl-alpha-D-muramoyl-L-alanyl-D-glutamate. 111 to 117 (GTNGKTT) provides a ligand contact to ATP. UDP-N-acetyl-alpha-D-muramoyl-L-alanyl-D-glutamate-binding positions include 153–154 (TT), Ser180, Gln186, and Arg188. Position 220 is an N6-carboxylysine (Lys220). Meso-2,6-diaminopimelate-binding positions include Arg378, 402-405 (DNPR), Gly455, and Glu459. Positions 402–405 (DNPR) match the Meso-diaminopimelate recognition motif motif.

This sequence belongs to the MurCDEF family. MurE subfamily. Mg(2+) serves as cofactor. In terms of processing, carboxylation is probably crucial for Mg(2+) binding and, consequently, for the gamma-phosphate positioning of ATP.

Its subcellular location is the cytoplasm. The enzyme catalyses UDP-N-acetyl-alpha-D-muramoyl-L-alanyl-D-glutamate + meso-2,6-diaminopimelate + ATP = UDP-N-acetyl-alpha-D-muramoyl-L-alanyl-gamma-D-glutamyl-meso-2,6-diaminopimelate + ADP + phosphate + H(+). Its pathway is cell wall biogenesis; peptidoglycan biosynthesis. Its function is as follows. Catalyzes the addition of meso-diaminopimelic acid to the nucleotide precursor UDP-N-acetylmuramoyl-L-alanyl-D-glutamate (UMAG) in the biosynthesis of bacterial cell-wall peptidoglycan. This chain is UDP-N-acetylmuramoyl-L-alanyl-D-glutamate--2,6-diaminopimelate ligase, found in Phocaeicola vulgatus (strain ATCC 8482 / DSM 1447 / JCM 5826 / CCUG 4940 / NBRC 14291 / NCTC 11154) (Bacteroides vulgatus).